The sequence spans 690 residues: Methionine--tRNA ligase (690 aa).

Positions 20-30 (PYANGSIHLGH) match the 'HIGH' region motif. Residues Cys151, Cys154, Cys164, and Cys167 each contribute to the Zn(2+) site. A 'KMSKS' region motif is present at residues 337 to 341 (KMSKS). Position 340 (Lys340) interacts with ATP. The 102-residue stretch at 589–690 (DFAKVDLRIA…EGAQPGMRVM (102 aa)) folds into the tRNA-binding domain.

Belongs to the class-I aminoacyl-tRNA synthetase family. MetG type 1 subfamily. As to quaternary structure, homodimer. Requires Zn(2+) as cofactor.

Its subcellular location is the cytoplasm. It carries out the reaction tRNA(Met) + L-methionine + ATP = L-methionyl-tRNA(Met) + AMP + diphosphate. Its function is as follows. Is required not only for elongation of protein synthesis but also for the initiation of all mRNA translation through initiator tRNA(fMet) aminoacylation. This chain is Methionine--tRNA ligase, found in Vibrio vulnificus (strain YJ016).